A 58-amino-acid polypeptide reads, in one-letter code: ACLARGETCKDDCECCDCDNQCYCPFDWFGGKWHPVGCSCAYTNKYVCDHKKEKCKKA.

5 cysteine pairs are disulfide-bonded: cysteine 2–cysteine 16, cysteine 9–cysteine 22, cysteine 15–cysteine 40, cysteine 24–cysteine 38, and cysteine 48–cysteine 55.

As to expression, expressed by the venom gland.

The protein resides in the secreted. Functionally, non-toxic to mice. This chain is U11-ctenitoxin-Pn1b, found in Phoneutria nigriventer (Brazilian armed spider).